The chain runs to 316 residues: Ornithine carbamoyltransferase (316 aa).

Carbamoyl phosphate-binding positions include 57-60, Gln-84, Arg-108, and 135-138; these read STRT and HPCQ. Residues Asn-166, Asp-230, and 234–235 each bind L-ornithine; that span reads SM. Carbamoyl phosphate contacts are provided by residues 269–270 and Arg-297; that span reads CL.

It belongs to the aspartate/ornithine carbamoyltransferase superfamily. OTCase family.

Its subcellular location is the cytoplasm. The catalysed reaction is carbamoyl phosphate + L-ornithine = L-citrulline + phosphate + H(+). The protein operates within amino-acid degradation; L-arginine degradation via ADI pathway; carbamoyl phosphate from L-arginine: step 2/2. Reversibly catalyzes the transfer of the carbamoyl group from carbamoyl phosphate (CP) to the N(epsilon) atom of ornithine (ORN) to produce L-citrulline. This is Ornithine carbamoyltransferase from Bacillus anthracis (strain CDC 684 / NRRL 3495).